The chain runs to 242 residues: Segregation and condensation protein A (242 aa).

This sequence belongs to the ScpA family. As to quaternary structure, component of a cohesin-like complex composed of ScpA, ScpB and the Smc homodimer, in which ScpA and ScpB bind to the head domain of Smc. The presence of the three proteins is required for the association of the complex with DNA.

The protein localises to the cytoplasm. Functionally, participates in chromosomal partition during cell division. May act via the formation of a condensin-like complex containing Smc and ScpB that pull DNA away from mid-cell into both cell halves. The chain is Segregation and condensation protein A from Lactococcus lactis subsp. cremoris (strain SK11).